Consider the following 204-residue polypeptide: Ubiquitin-conjugating enzyme E2 T (204 aa).

The region spanning Gln2–Arg152 is the UBC core domain. Cys86 functions as the Glycyl thioester intermediate in the catalytic mechanism. Glycyl lysine isopeptide (Lys-Gly) (interchain with G-Cter in ubiquitin) cross-links involve residues Lys91 and Lys181. Residues His150–Ser204 are disordered. Glycyl lysine isopeptide (Lys-Gly) (interchain with G-Cter in SUMO2) cross-links involve residues Lys190 and Lys191. Ser193 is modified (phosphoserine).

It belongs to the ubiquitin-conjugating enzyme family. In terms of assembly, interacts with FANCL and BRCA1. Auto-ubiquitinated. Effects of auto-monoubiquitination at Lys-91 and Lys-181 are unclear.

The protein localises to the nucleus. The catalysed reaction is S-ubiquitinyl-[E1 ubiquitin-activating enzyme]-L-cysteine + [E2 ubiquitin-conjugating enzyme]-L-cysteine = [E1 ubiquitin-activating enzyme]-L-cysteine + S-ubiquitinyl-[E2 ubiquitin-conjugating enzyme]-L-cysteine.. The protein operates within protein modification; protein ubiquitination. Accepts ubiquitin from the E1 complex and catalyzes its covalent attachment to other proteins. Catalyzes monoubiquitination. Involved in mitomycin-C (MMC)-induced DNA repair: acts as a specific E2 ubiquitin-conjugating enzyme for the Fanconi anemia complex by associating with E3 ubiquitin-protein ligase FANCL and catalyzing monoubiquitination of FANCD2, a key step in the DNA damage pathway. Also mediates monoubiquitination of FANCL and FANCI. May contribute to ubiquitination and degradation of BRCA1. In vitro able to promote polyubiquitination using all 7 ubiquitin Lys residues, but may prefer 'Lys-11'-, 'Lys-27'-, 'Lys-48'- and 'Lys-63'-linked polyubiquitination. This is Ubiquitin-conjugating enzyme E2 T (Ube2t) from Mus musculus (Mouse).